The chain runs to 129 residues: MADKELKFLVVDDFSTMRRIVRNLLKELGFNNVEEAEDGLDALNKLQAGGYGFVISDWNMPNMDGLELLKTIRADGAMSALPVLMVTAEAKKENIIAAAQAGASGYVVKPFTAATLEEKLNKIFEKLGM.

In terms of domain architecture, Response regulatory spans 7–124 (KFLVVDDFST…TLEEKLNKIF (118 aa)). Mg(2+) is bound by residues Asp12, Asp13, Asp57, and Asn59. Asp57 is subject to 4-aspartylphosphate. N6-acetyllysine occurs at positions 92 and 109.

The cofactor is Mg(2+). Phosphorylated by CheA or acetylated by acetyl-CoA synthetase, depending on which acetate metabolism pathway is available.

It is found in the cytoplasm. Involved in the transmission of sensory signals from the chemoreceptors to the flagellar motors. In its active (phosphorylated or acetylated) form, CheY exhibits enhanced binding to a switch component, FliM, at the flagellar motor which induces a change from counterclockwise to clockwise flagellar rotation. The chain is Chemotaxis protein CheY (cheY) from Escherichia coli O6:H1 (strain CFT073 / ATCC 700928 / UPEC).